Here is an 82-residue protein sequence, read N- to C-terminus: MSGTTGERPFSDIITSVRYWVIHSITIPALFIAGWLFVSTGLAYDAFGTPRPNEYFTPARQEVPIVKNRFEAKKQVEQFIGK.

A helical membrane pass occupies residues 21–35 (VIHSITIPALFIAGW). Residue His-23 coordinates heme.

Belongs to the PsbE/PsbF family. As to quaternary structure, heterodimer of an alpha subunit and a beta subunit. PSII is composed of 1 copy each of membrane proteins PsbA, PsbB, PsbC, PsbD, PsbE, PsbF, PsbH, PsbI, PsbJ, PsbK, PsbL, PsbM, PsbT, PsbX, PsbY, PsbZ, Psb30/Ycf12, peripheral proteins PsbO, CyanoQ (PsbQ), PsbU, PsbV and a large number of cofactors. It forms dimeric complexes. Requires heme b as cofactor.

Its subcellular location is the cellular thylakoid membrane. Its function is as follows. This b-type cytochrome is tightly associated with the reaction center of photosystem II (PSII). PSII is a light-driven water:plastoquinone oxidoreductase that uses light energy to abstract electrons from H(2)O, generating O(2) and a proton gradient subsequently used for ATP formation. It consists of a core antenna complex that captures photons, and an electron transfer chain that converts photonic excitation into a charge separation. The chain is Cytochrome b559 subunit alpha from Nostoc punctiforme (strain ATCC 29133 / PCC 73102).